Reading from the N-terminus, the 130-residue chain is Ribosome-binding factor A (130 aa).

It belongs to the RbfA family. Monomer. Binds 30S ribosomal subunits, but not 50S ribosomal subunits or 70S ribosomes.

The protein localises to the cytoplasm. Its function is as follows. One of several proteins that assist in the late maturation steps of the functional core of the 30S ribosomal subunit. Associates with free 30S ribosomal subunits (but not with 30S subunits that are part of 70S ribosomes or polysomes). Required for efficient processing of 16S rRNA. May interact with the 5'-terminal helix region of 16S rRNA. The sequence is that of Ribosome-binding factor A from Prochlorococcus marinus (strain MIT 9312).